The chain runs to 490 residues: GTPase Der (490 aa).

EngA-type G domains are found at residues 3 to 166 (PVVA…MEDL) and 203 to 376 (IKLA…DSST). GTP is bound by residues 9-16 (GRPNVGKS), 56-60 (DTGGI), 118-121 (NKTD), 209-216 (GRPNVGKS), 256-260 (DTAGV), and 321-324 (NKWD). A KH-like domain is found at 377–461 (RRVGTSMLTR…PIRIQFKEGE (85 aa)).

The protein belongs to the TRAFAC class TrmE-Era-EngA-EngB-Septin-like GTPase superfamily. EngA (Der) GTPase family. In terms of assembly, associates with the 50S ribosomal subunit.

In terms of biological role, GTPase that plays an essential role in the late steps of ribosome biogenesis. The polypeptide is GTPase Der (Escherichia coli O81 (strain ED1a)).